The primary structure comprises 223 residues: Cell division protein SepF (223 aa).

A disordered region spans residues 19–81; sequence YDDEYYDDRG…YPPPGGYRGG (63 aa). The span at 36–69 shows a compositional bias: basic and acidic residues; sequence PRFEDDYGRYEGRDFEDPRRDPRAGMRADLRGEP.

The protein belongs to the SepF family. As to quaternary structure, homodimer. Interacts with FtsZ.

It localises to the cytoplasm. Functionally, cell division protein that is part of the divisome complex and is recruited early to the Z-ring. Probably stimulates Z-ring formation, perhaps through the cross-linking of FtsZ protofilaments. Its function overlaps with FtsA. The polypeptide is Cell division protein SepF (Mycobacterium ulcerans (strain Agy99)).